Reading from the N-terminus, the 355-residue chain is Peptide chain release factor 1 (355 aa).

N5-methylglutamine is present on Gln231. Over residues 283–292 the composition is skewed to basic and acidic residues; it reads IAKETSERKS. The segment at 283-303 is disordered; that stretch reads IAKETSERKSQVGTGDRSGRI.

The protein belongs to the prokaryotic/mitochondrial release factor family. Post-translationally, methylated by PrmC. Methylation increases the termination efficiency of RF1.

Its subcellular location is the cytoplasm. In terms of biological role, peptide chain release factor 1 directs the termination of translation in response to the peptide chain termination codons UAG and UAA. The chain is Peptide chain release factor 1 from Campylobacter curvus (strain 525.92).